A 278-amino-acid polypeptide reads, in one-letter code: Pre-hexon-linking protein VIII (278 aa).

Residues 114–199 (SPSLLSGGAS…ILRYRRLGQQ (86 aa)) constitute a propeptide that is removed on maturation.

Belongs to the adenoviridae hexon-linking protein family. As to quaternary structure, interacts with the peripentonal hexons as well as the hexons in the facets. Part of a complex composed of the core-capsid bridging protein, the endosome lysis protein VI and the hexon-linking protein VIII; these interactions bridge the virus core to the capsid. Cleaved by the viral protease during virion maturation. May cause the middle segment to be shed from the capsid.

The protein localises to the virion. The protein resides in the host nucleus. In terms of biological role, structural component of the virion that acts as a cement protein on the capsid interior and which glue the peripentonal hexons and group-of-nine hexons together. This Pantherophis guttatus (Corn snake) protein is Pre-hexon-linking protein VIII.